Here is a 168-residue protein sequence, read N- to C-terminus: N-alpha-acetyltransferase 50 (168 aa).

Residues 5–154 enclose the N-acetyltransferase domain; that stretch reads IELGDVTPHN…DAHVLQKSLR (150 aa). Tyrosine 30 provides a ligand contact to substrate. Tyrosine 72 is an active-site residue. Methionine 74 serves as a coordination point for substrate. 76-89 lines the acetyl-CoA pocket; that stretch reads LGCLAPYRRLGIGT. Residue histidine 111 is part of the active site. 116–125 is a CoA binding site; the sequence is NESAIDFYQK. The segment at 137–140 is substrate; that stretch reads YYKR.

The protein belongs to the acetyltransferase family. GNAT subfamily. Interacts with naa35.

The protein localises to the cytoplasm. Its subcellular location is the nucleus. It catalyses the reaction N-terminal L-methionyl-L-alanyl-[protein] + acetyl-CoA = N-terminal N(alpha)-acetyl-L-methionyl-L-alanyl-[protein] + CoA + H(+). It carries out the reaction N-terminal L-methionyl-L-seryl-[protein] + acetyl-CoA = N-terminal N(alpha)-acetyl-L-methionyl-L-seryl-[protein] + CoA + H(+). The catalysed reaction is N-terminal L-methionyl-L-valyl-[protein] + acetyl-CoA = N-terminal N(alpha)-acetyl-L-methionyl-L-valyl-[protein] + CoA + H(+). The enzyme catalyses N-terminal L-methionyl-L-threonyl-[protein] + acetyl-CoA = N-terminal N(alpha)-acetyl-L-methionyl-L-threonyl-[protein] + CoA + H(+). It catalyses the reaction N-terminal L-methionyl-L-lysyl-[protein] + acetyl-CoA = N-terminal N(alpha)-acetyl-L-methionyl-L-lysyl-[protein] + CoA + H(+). It carries out the reaction N-terminal L-methionyl-L-leucyl-[protein] + acetyl-CoA = N-terminal N(alpha)-acetyl-L-methionyl-L-leucyl-[protein] + CoA + H(+). The catalysed reaction is N-terminal L-methionyl-L-phenylalanyl-[protein] + acetyl-CoA = N-terminal N(alpha)-acetyl-L-methionyl-L-phenylalanyl-[protein] + CoA + H(+). The enzyme catalyses N-terminal L-methionyl-L-tyrosyl-[protein] + acetyl-CoA = N-terminal N(alpha)-acetyl-L-methionyl-L-tyrosyl-[protein] + CoA + H(+). Its function is as follows. N-alpha-acetyltransferase that acetylates the N-terminus of proteins that retain their initiating methionine. Has a broad substrate specificity: able to acetylate the initiator methionine of most peptides, except for those with a proline in second position. Also displays N-epsilon-acetyltransferase activity by mediating acetylation of the side chain of specific lysines on proteins. The relevance of N-epsilon-acetyltransferase activity is however unclear. Required for sister chromatid cohesion during mitosis by promoting binding of CDCA5/sororin to cohesin. Essential in embryonic cell proliferation and survival. In Danio rerio (Zebrafish), this protein is N-alpha-acetyltransferase 50 (naa50).